The sequence spans 647 residues: Threonine--tRNA ligase (647 aa).

One can recognise a TGS domain in the interval 1-61 (MIKITFPDGA…EEDGSIEIVT (61 aa)). Residues 240 to 538 (DHRKLGKELD…LIETYKGAFP (299 aa)) form a catalytic region. Positions 334, 385, and 515 each coordinate Zn(2+).

The protein belongs to the class-II aminoacyl-tRNA synthetase family. Homodimer. It depends on Zn(2+) as a cofactor.

Its subcellular location is the cytoplasm. The enzyme catalyses tRNA(Thr) + L-threonine + ATP = L-threonyl-tRNA(Thr) + AMP + diphosphate + H(+). In terms of biological role, catalyzes the attachment of threonine to tRNA(Thr) in a two-step reaction: L-threonine is first activated by ATP to form Thr-AMP and then transferred to the acceptor end of tRNA(Thr). Also edits incorrectly charged L-seryl-tRNA(Thr). The chain is Threonine--tRNA ligase from Streptococcus pyogenes serotype M6 (strain ATCC BAA-946 / MGAS10394).